The sequence spans 162 residues: MLRQLRLTMDILGWIFLPWRRSISNIKDSPPPPPLASTFDDVIVDYEDPDYLPLPEYPVRPNEPLETRKQRLLYQSRKRGMLENDLLLSTFAAKHLQNFSAEQTAQYDQLINGVSNDWDIYYWATDVKPTPKEYDTEIMRLLKKHVKNAEGVTRLRQPDLNT.

This sequence belongs to the SDHAF2 family. As to quaternary structure, interacts with the flavoprotein subunit within the SDH catalytic dimer.

It is found in the mitochondrion matrix. Its function is as follows. Plays an essential role in the assembly of succinate dehydrogenase (SDH), an enzyme complex (also referred to as respiratory complex II) that is a component of both the tricarboxylic acid (TCA) cycle and the mitochondrial electron transport chain, and which couples the oxidation of succinate to fumarate with the reduction of ubiquinone (coenzyme Q) to ubiquinol. Required for flavinylation (covalent attachment of FAD) of the flavoprotein subunit of the SDH catalytic dimer. The chain is Succinate dehydrogenase assembly factor 2-A, mitochondrial from Drosophila yakuba (Fruit fly).